The following is a 232-amino-acid chain: Ubiquinone biosynthesis O-methyltransferase (232 aa).

Arg-36, Gly-55, Asp-76, and Leu-120 together coordinate S-adenosyl-L-methionine.

This sequence belongs to the methyltransferase superfamily. UbiG/COQ3 family.

The catalysed reaction is a 3-demethylubiquinol + S-adenosyl-L-methionine = a ubiquinol + S-adenosyl-L-homocysteine + H(+). The enzyme catalyses a 3-(all-trans-polyprenyl)benzene-1,2-diol + S-adenosyl-L-methionine = a 2-methoxy-6-(all-trans-polyprenyl)phenol + S-adenosyl-L-homocysteine + H(+). It functions in the pathway cofactor biosynthesis; ubiquinone biosynthesis. O-methyltransferase that catalyzes the 2 O-methylation steps in the ubiquinone biosynthetic pathway. The chain is Ubiquinone biosynthesis O-methyltransferase from Pseudomonas aeruginosa (strain UCBPP-PA14).